The chain runs to 726 residues: Kinesin-like protein KIN-10B (726 aa).

3 disordered regions span residues 1-20 (MEQQ…RVVA), 60-82 (AATA…QQQK), and 402-423 (KNAR…TANR). The 345-residue stretch at 15–359 (GVRVVARICP…LALASRSSQV (345 aa)) folds into the Kinesin motor domain. Over residues 408 to 423 (FNNSGVKGGQTPTANR) the composition is skewed to polar residues.

The protein belongs to the TRAFAC class myosin-kinesin ATPase superfamily. Kinesin family. KIN-10 subfamily.

The polypeptide is Kinesin-like protein KIN-10B (Oryza sativa subsp. japonica (Rice)).